A 450-amino-acid chain; its full sequence is Probable ECA polymerase (450 aa).

The next 11 helical transmembrane spans lie at 6–26, 37–57, 63–83, 118–138, 155–175, 181–201, 207–227, 228–248, 341–361, 378–398, and 410–430; these read FSGL…LTWF, VFFS…TSVL, VGVA…CFYA, VILM…NGFL, GVAL…VYFL, AWLF…MIVG, IIIA…ISLW, MLAA…LKRY, LVVM…GLII, YKAA…IVLA, and VFFI…YWLF.

This sequence belongs to the WzyE family. In terms of assembly, probably part of a complex composed of WzxE, WzyE and WzzE.

It localises to the cell inner membrane. It participates in bacterial outer membrane biogenesis; enterobacterial common antigen biosynthesis. Probably involved in the polymerization of enterobacterial common antigen (ECA) trisaccharide repeat units. This is Probable ECA polymerase from Shigella sonnei (strain Ss046).